The chain runs to 510 residues: UDP-N-acetylmuramoylalanine--D-glutamate ligase (510 aa).

138-144 (GTNGKTT) lines the ATP pocket. A disordered region spans residues 294–316 (FDEPAPAPRRKKDAPPPTRAGGR).

The protein belongs to the MurCDEF family.

Its subcellular location is the cytoplasm. It catalyses the reaction UDP-N-acetyl-alpha-D-muramoyl-L-alanine + D-glutamate + ATP = UDP-N-acetyl-alpha-D-muramoyl-L-alanyl-D-glutamate + ADP + phosphate + H(+). Its pathway is cell wall biogenesis; peptidoglycan biosynthesis. Its function is as follows. Cell wall formation. Catalyzes the addition of glutamate to the nucleotide precursor UDP-N-acetylmuramoyl-L-alanine (UMA). This is UDP-N-acetylmuramoylalanine--D-glutamate ligase from Bordetella pertussis (strain Tohama I / ATCC BAA-589 / NCTC 13251).